Here is a 74-residue protein sequence, read N- to C-terminus: Peptide ToAP4 (74 aa).

A signal peptide spans 1–22; the sequence is MQIKHLITLFFLVLIVADQCSA. Lysine 39 is subject to Lysine amide. The propeptide occupies 40–74; that stretch reads GGRRKREIAAQIEQYRDLQKREAELEELLDRLPMF.

It belongs to the non-disulfide-bridged peptide (NDBP) superfamily. Short antimicrobial peptide (group 4) family. As to expression, expressed by the venom gland.

It is found in the secreted. Its function is as follows. Shows anti-inflammatory activities, since it decreases release of pro-inflammatory cytokines, and increases release of anti-inflammatory cytokines. Acts by blocking the Toll-like receptor 4 (TLR4). Also increases MHC-II expression in LPS-stimulated cells. Does not show antibacterial activity on Mycobacterium abscessus subsp. massiliense. Does not show antifungal activity. Has low hemolytic activity on human erythrocyte and low monocyte cytotoxicity. In vivo, does not induce immune cell migration. Helical wheel projections predict an amphipathic peptide with distinct hydrophobic and hydrophilic faces. In Tityus obscurus (Amazonian scorpion), this protein is Peptide ToAP4.